The chain runs to 122 residues: Putative iron-sulfur cluster insertion protein ErpA (122 aa).

Iron-sulfur cluster-binding residues include Cys50, Cys114, and Cys116.

It belongs to the HesB/IscA family. Homodimer. Iron-sulfur cluster serves as cofactor.

In terms of biological role, required for insertion of 4Fe-4S clusters. In Cupriavidus necator (strain ATCC 17699 / DSM 428 / KCTC 22496 / NCIMB 10442 / H16 / Stanier 337) (Ralstonia eutropha), this protein is Putative iron-sulfur cluster insertion protein ErpA.